The following is an 857-amino-acid chain: A-kinase anchor protein 1, mitochondrial (857 aa).

A mitochondrion-targeting transit peptide spans 1–29 (MAIQLRSLFPLALPGMLALLGWWWFFSRK). Ser-55 carries the phosphoserine modification. Residues 65 to 121 (VAPTVTQPPGREEQRCVDKPSTEPLALPRTRQVRRRSESSGNLPSVADTRSQPGPCR) form a disordered region. Over residues 74 to 85 (GREEQRCVDKPS) the composition is skewed to basic and acidic residues. 3 positions are modified to phosphoserine: Ser-101, Ser-103, and Ser-164. Residues 103–116 (SSGNLPSVADTRSQ) show a composition bias toward polar residues. 2 disordered regions span residues 165 to 198 (ALGKTPGRGWPSPYAASGEKARETGGTEGTGDAV) and 260 to 303 (FVEP…VPEN). Basic and acidic residues predominate over residues 286–299 (SDRDLAGELDKDET). The interval 306 to 319 (IKQAAFQLISQVIL) is PKA-RII subunit binding domain. Disordered stretches follow at residues 336-437 (QVHP…NPRG), 466-497 (STSGLEDSCTETISSSGDKAMTPPLPVSTQPF), and 512-554 (EDGW…QAGS). Over residues 354 to 379 (PASQETSLGQDTSDPASTRTGATASP) the composition is skewed to polar residues. Residue Thr-401 is modified to Phosphothreonine. A compositionally biased stretch (polar residues) spans 466–482 (STSGLEDSCTETISSSG). The residue at position 487 (Thr-487) is a Phosphothreonine. Ser-527 and Ser-546 each carry phosphoserine. Residues 545–554 (DSPQSVQAGS) are compositionally biased toward polar residues. Residues 561–625 (LIIWEIEVPK…HHVDKALNLI (65 aa)) enclose the KH domain. Residues 712–771 (PVEITVICAAPGADGAWWRAQVVASYEETNEVEIRYVDYGGYKRVKVDVLRQIRSDFVTL) form the Tudor domain.

Interacts with SLC8A3. Interacts with CFAP91. Interacts with CLPB. Interacts with NDUFS1. As to expression, highest expression in testis, heart, liver, skeletal muscle, intestine and kidney, followed by brain and lung. No expression in spleen. Isoform 1/D-AKAP1A is expressed predominantly in testis whereas isoform 4/D-AKAP1D is expressed primarily in liver. Expression is decreased in hearts of diabetic mice (at protein level).

The protein resides in the mitochondrion outer membrane. Its subcellular location is the mitochondrion. The protein localises to the endoplasmic reticulum. In terms of biological role, differentially targeted protein that binds to type I and II regulatory subunits of protein kinase A. Anchors them to the cytoplasmic face of the mitochondrial outer membrane or allows them to reside in the endoplasmic reticulum. Involved in mitochondrial-mediated antiviral innate immunity. Promotes translocation of NDUFS1 into mitochondria to regulate mitochondrial membrane respiratory chain NADH dehydrogenase (Complex I) activity. Under diabetic conditions, myocardial AKAP1 expression decreases which blocks the translocation of NDUFS1 from the cytosol to mitochondria. Reduction of NDUFS1 in mitochondria decreases ATP production and increases mitochondrial ROS level, which causes mitochondrial dysfunction and cell apoptosis, respectively, thereby leading to cardiac dysfunction. This chain is A-kinase anchor protein 1, mitochondrial, found in Mus musculus (Mouse).